The sequence spans 118 residues: Small ribosomal subunit protein uS13 (118 aa).

The tract at residues arginine 93–lysine 118 is disordered.

Belongs to the universal ribosomal protein uS13 family. Part of the 30S ribosomal subunit. Forms a loose heterodimer with protein S19. Forms two bridges to the 50S subunit in the 70S ribosome.

Functionally, located at the top of the head of the 30S subunit, it contacts several helices of the 16S rRNA. In the 70S ribosome it contacts the 23S rRNA (bridge B1a) and protein L5 of the 50S subunit (bridge B1b), connecting the 2 subunits; these bridges are implicated in subunit movement. Contacts the tRNAs in the A and P-sites. This is Small ribosomal subunit protein uS13 from Azotobacter vinelandii (strain DJ / ATCC BAA-1303).